The following is a 309-amino-acid chain: Elongator complex protein 5 (309 aa).

Phosphoserine occurs at positions 3 and 4.

The protein belongs to the ELP5 family. Component of the elongator complex, which consists of ELP1/IKI3, ELP2, ELP3, ELP4, ELP5/IKI1 and ELP6. The elongator complex is composed of two copies of the Elp123 subcomplex (composed of ELP1/IKI3, ELP2 and ELP3) and two copies of the Elp456 subcomplex (composed of ELP4, ELP5/IKI1 and ELP6). The Elp123 subcomplex forms a two-lobed scaffold, which binds the Elp456 subcomplex asymmetrically. In each lobe, ELP2 is tightly sandwiched between ELP1/IKI3 and ELP3. The Elp123 subcomplex binds tRNA through ELP1/IKI3 and ELP3 and can bind 2 tRNAs simultaneously. tRNA-binding by the Elp123 subcomplex induces conformational rearrangements which precisely position the targeted anticodon base in the active site. The Elp456 subcomplex binds tRNA and has ATPase activity. Interacts with KTI11/DPH3.

It is found in the cytoplasm. It localises to the nucleus. It functions in the pathway tRNA modification; 5-methoxycarbonylmethyl-2-thiouridine-tRNA biosynthesis. Its function is as follows. Component of the elongator complex which is required for multiple tRNA modifications, including mcm5U (5-methoxycarbonylmethyl uridine), mcm5s2U (5-methoxycarbonylmethyl-2-thiouridine), and ncm5U (5-carbamoylmethyl uridine). The elongator complex catalyzes formation of carboxymethyluridine in the wobble base at position 34 in tRNAs. It functions as a gamma-toxin target (TOT); disruption of the complex confers resistance to Kluyveromyces lactis toxin zymocin (pGKL1 killer toxin). May also be involved in sensitivity to Pichia inositovora toxin. The polypeptide is Elongator complex protein 5 (IKI1) (Saccharomyces cerevisiae (strain ATCC 204508 / S288c) (Baker's yeast)).